Reading from the N-terminus, the 289-residue chain is 4-hydroxy-3-methylbut-2-enyl diphosphate reductase (289 aa).

A [4Fe-4S] cluster-binding site is contributed by Cys12. (2E)-4-hydroxy-3-methylbut-2-enyl diphosphate is bound by residues His41 and His84. Dimethylallyl diphosphate-binding residues include His41 and His84. Isopentenyl diphosphate-binding residues include His41 and His84. Residue Cys106 coordinates [4Fe-4S] cluster. Residue His134 participates in (2E)-4-hydroxy-3-methylbut-2-enyl diphosphate binding. His134 serves as a coordination point for dimethylallyl diphosphate. Position 134 (His134) interacts with isopentenyl diphosphate. Glu136 serves as the catalytic Proton donor. Residue Ser172 participates in (2E)-4-hydroxy-3-methylbut-2-enyl diphosphate binding. Cys200 is a [4Fe-4S] cluster binding site. (2E)-4-hydroxy-3-methylbut-2-enyl diphosphate-binding residues include Ser229, Asn231, and Ser273. Dimethylallyl diphosphate-binding residues include Ser229, Asn231, and Ser273. Isopentenyl diphosphate-binding residues include Ser229, Asn231, and Ser273.

Belongs to the IspH family. It depends on [4Fe-4S] cluster as a cofactor.

It carries out the reaction isopentenyl diphosphate + 2 oxidized [2Fe-2S]-[ferredoxin] + H2O = (2E)-4-hydroxy-3-methylbut-2-enyl diphosphate + 2 reduced [2Fe-2S]-[ferredoxin] + 2 H(+). It catalyses the reaction dimethylallyl diphosphate + 2 oxidized [2Fe-2S]-[ferredoxin] + H2O = (2E)-4-hydroxy-3-methylbut-2-enyl diphosphate + 2 reduced [2Fe-2S]-[ferredoxin] + 2 H(+). The protein operates within isoprenoid biosynthesis; dimethylallyl diphosphate biosynthesis; dimethylallyl diphosphate from (2E)-4-hydroxy-3-methylbutenyl diphosphate: step 1/1. Its pathway is isoprenoid biosynthesis; isopentenyl diphosphate biosynthesis via DXP pathway; isopentenyl diphosphate from 1-deoxy-D-xylulose 5-phosphate: step 6/6. In terms of biological role, catalyzes the conversion of 1-hydroxy-2-methyl-2-(E)-butenyl 4-diphosphate (HMBPP) into a mixture of isopentenyl diphosphate (IPP) and dimethylallyl diphosphate (DMAPP). Acts in the terminal step of the DOXP/MEP pathway for isoprenoid precursor biosynthesis. In Opitutus terrae (strain DSM 11246 / JCM 15787 / PB90-1), this protein is 4-hydroxy-3-methylbut-2-enyl diphosphate reductase.